The sequence spans 473 residues: Trehalose-6-phosphate synthase (473 aa).

A D-glucose 6-phosphate-binding site is contributed by arginine 10. 21–22 (GG) contributes to the UDP-alpha-D-glucose binding site. Residues tyrosine 76 and aspartate 130 each coordinate D-glucose 6-phosphate. 2 residues coordinate UDP-alpha-D-glucose: arginine 262 and lysine 267. Arginine 300 contacts D-glucose 6-phosphate. Residues phenylalanine 339 and 365–369 (LVAKE) each bind UDP-alpha-D-glucose.

It belongs to the glycosyltransferase 20 family. As to quaternary structure, homotetramer.

The enzyme catalyses D-glucose 6-phosphate + UDP-alpha-D-glucose = alpha,alpha-trehalose 6-phosphate + UDP + H(+). It functions in the pathway glycan biosynthesis; trehalose biosynthesis. In terms of biological role, probably involved in the osmoprotection via the biosynthesis of trehalose. Catalyzes the transfer of glucose from UDP-alpha-D-glucose (UDP-Glc) to D-glucose 6-phosphate (Glc-6-P) to form trehalose-6-phosphate. Acts with retention of the anomeric configuration of the UDP-sugar donor. This is Trehalose-6-phosphate synthase from Citrobacter koseri (strain ATCC BAA-895 / CDC 4225-83 / SGSC4696).